The following is a 430-amino-acid chain: Dolichyl-diphosphooligosaccharide--protein glycosyltransferase subunit WBP1 (430 aa).

The N-terminal stretch at 1-20 (MRTDWNFFFCILLQAIFVVG) is a signal peptide. The Lumenal segment spans residues 24–393 (SRTLVLYDQS…PRSWEISNSW (370 aa)). N-linked (GlcNAc...) asparagine glycosylation is found at Asn-60 and Asn-332. Residues 394–414 (VYISAICGVIVAWIFFVVSFV) traverse the membrane as a helical segment. At 415–430 (TTSSVGKKLETFKKTN) the chain is on the cytoplasmic side.

This sequence belongs to the DDOST 48 kDa subunit family. Component of the oligosaccharyltransferase (OST) complex, which appears to exist in two assemblies comprising OST1, OST2, OST4, OST5, STT3, SWP1, WPB1, and either OST3 or OST6. OST assembly occurs through the formation of 3 subcomplexes. Subcomplex 1 contains OST1 and OST5, subcomplex 2 contains STT3, OST3, and OST4, and subcomplex 3 contains OST2, WBP1, and SWP1. Interacts with SEC61, SBH1 and SSS1.

It is found in the endoplasmic reticulum membrane. It functions in the pathway protein modification; protein glycosylation. Subunit of the oligosaccharyl transferase (OST) complex that catalyzes the initial transfer of a defined glycan (Glc(3)Man(9)GlcNAc(2) in eukaryotes) from the lipid carrier dolichol-pyrophosphate to an asparagine residue within an Asn-X-Ser/Thr consensus motif in nascent polypeptide chains, the first step in protein N-glycosylation. N-glycosylation occurs cotranslationally and the complex associates with the Sec61 complex at the channel-forming translocon complex that mediates protein translocation across the endoplasmic reticulum (ER). All subunits are required for a maximal enzyme activity. The polypeptide is Dolichyl-diphosphooligosaccharide--protein glycosyltransferase subunit WBP1 (WBP1) (Saccharomyces cerevisiae (strain ATCC 204508 / S288c) (Baker's yeast)).